Consider the following 295-residue polypeptide: Bifunctional protein FolD (295 aa).

NADP(+) is bound by residues 166-168, serine 191, and isoleucine 232; that span reads GRS.

The protein belongs to the tetrahydrofolate dehydrogenase/cyclohydrolase family. In terms of assembly, homodimer.

It catalyses the reaction (6R)-5,10-methylene-5,6,7,8-tetrahydrofolate + NADP(+) = (6R)-5,10-methenyltetrahydrofolate + NADPH. It carries out the reaction (6R)-5,10-methenyltetrahydrofolate + H2O = (6R)-10-formyltetrahydrofolate + H(+). Its pathway is one-carbon metabolism; tetrahydrofolate interconversion. Functionally, catalyzes the oxidation of 5,10-methylenetetrahydrofolate to 5,10-methenyltetrahydrofolate and then the hydrolysis of 5,10-methenyltetrahydrofolate to 10-formyltetrahydrofolate. The chain is Bifunctional protein FolD from Wolbachia sp. subsp. Brugia malayi (strain TRS).